The following is a 233-amino-acid chain: MSVISMKQLLEAGVHFGHQTRRWNPKMKRYIFTERNGIYIIDLQKTVKKVEEAFKVMRDIAAEGGDILFVGTKKQAQEAIKEEATRAGMYFVNQRWLGGTLTNFQTIQKRIKRLKDIERMQEDGTFEVLPKKEVVQLKKELERLEKFLGGIKDMKGLPSALFVVDPRKERIAVAEARKLHIPIIGIVDTNCDPDEIDHVIPANDDAIRAVKLLTSKMADAILEAKQGEETVTA.

Belongs to the universal ribosomal protein uS2 family.

This chain is Small ribosomal subunit protein uS2, found in Bacillus anthracis.